Reading from the N-terminus, the 206-residue chain is Synaptosomal-associated protein 25 (206 aa).

Basic and acidic residues predominate over residues Met-1–Gln-20. Positions Met-1 to Ser-25 are disordered. Residues Met-1–Glu-75 form an interaction with CENPF region. Positions Asp-19–Leu-81 constitute a t-SNARE coiled-coil homology 1 domain. Residues Cys-85, Cys-88, Cys-90, and Cys-92 are each lipidated (S-palmitoyl cysteine). Positions Gly-111 to Val-120 are interaction with ZDHHC17. Residue Thr-138 is modified to Phosphothreonine. The 63-residue stretch at Asp-140 to Met-202 folds into the t-SNARE coiled-coil homology 2 domain. 2 positions are modified to phosphoserine: Ser-154 and Ser-187.

This sequence belongs to the SNAP-25 family. In terms of assembly, part of the SNARE core complex containing SNAP25, VAMP2 and STX1A; this complex binds CPLX1. Found in a complex containing SYT1, SV2B and syntaxin-1. Found in a ternary complex with STX1A and VAMP8. Interacts with HSC70 and with SYT9, forming a complex with DNAJC5. The interaction with SYT9 is inhibited in presence of calcium. Isoform 1 and isoform 2 interact with BLOC1S6. Interacts with CENPF. Interacts with EQTN. Interacts with HGS. Interacts with KCNB1 (via N-terminus); reduces the voltage-dependent potassium channel KCNB1 activity in pancreatic beta cells. Interacts with OTOF. Interacts with RIMS1. Interacts with SNAPIN. Interacts with STXBP6. Interacts with TRIM9. Interacts with ZDHHC13 (via ANK repeats). Interacts with ZDHHC17 (via ANK repeats). Associates with the BLOC-1 complex. Interacts with PLCL1 (via C2 domain). Interacts with PRRT2; this interaction may impair the formation of the SNARE complex. Interacts with alpha-synuclein/SNCA. Interacts with PRPH2. Interacts with ROM1. Interacts with STX3. Palmitoylated. Cys-85 appears to be the main site, and palmitoylation is required for membrane association.

The protein localises to the cytoplasm. It is found in the perinuclear region. Its subcellular location is the cell membrane. It localises to the synapse. The protein resides in the synaptosome. The protein localises to the photoreceptor inner segment. Functionally, t-SNARE involved in the molecular regulation of neurotransmitter release. May play an important role in the synaptic function of specific neuronal systems. Associates with proteins involved in vesicle docking and membrane fusion. Regulates plasma membrane recycling through its interaction with CENPF. Modulates the gating characteristics of the delayed rectifier voltage-dependent potassium channel KCNB1 in pancreatic beta cells. This Pongo abelii (Sumatran orangutan) protein is Synaptosomal-associated protein 25 (SNAP25).